The sequence spans 224 residues: Holliday junction branch migration complex subunit RuvA (224 aa).

The domain I stretch occupies residues 1 to 67 (MISWLKGEKV…EDGTSLYGFI (67 aa)). The domain II stretch occupies residues 68–146 (EVNQRDLFRE…RFTDNDKTIH (79 aa)). Residues 147 to 155 (ENKKGIEAN) form a flexible linker region. Positions 156–224 (QFSKYIDEIY…ILMKLSEKTT (69 aa)) are domain III.

This sequence belongs to the RuvA family. As to quaternary structure, homotetramer. Forms an RuvA(8)-RuvB(12)-Holliday junction (HJ) complex. HJ DNA is sandwiched between 2 RuvA tetramers; dsDNA enters through RuvA and exits via RuvB. An RuvB hexamer assembles on each DNA strand where it exits the tetramer. Each RuvB hexamer is contacted by two RuvA subunits (via domain III) on 2 adjacent RuvB subunits; this complex drives branch migration. In the full resolvosome a probable DNA-RuvA(4)-RuvB(12)-RuvC(2) complex forms which resolves the HJ.

Its subcellular location is the cytoplasm. Functionally, the RuvA-RuvB-RuvC complex processes Holliday junction (HJ) DNA during genetic recombination and DNA repair, while the RuvA-RuvB complex plays an important role in the rescue of blocked DNA replication forks via replication fork reversal (RFR). RuvA specifically binds to HJ cruciform DNA, conferring on it an open structure. The RuvB hexamer acts as an ATP-dependent pump, pulling dsDNA into and through the RuvAB complex. HJ branch migration allows RuvC to scan DNA until it finds its consensus sequence, where it cleaves and resolves the cruciform DNA. The sequence is that of Holliday junction branch migration complex subunit RuvA from Prochlorococcus marinus (strain NATL1A).